A 398-amino-acid polypeptide reads, in one-letter code: tRNA-specific 2-thiouridylase MnmA (398 aa).

ATP-binding positions include 20-27 (AMSGGVDS) and leucine 46. Catalysis depends on cysteine 114, which acts as the Nucleophile. Cysteine 114 and cysteine 210 are disulfide-bonded. Glycine 138 provides a ligand contact to ATP. An interaction with tRNA region spans residues 160–162 (RDQ). The active-site Cysteine persulfide intermediate is the cysteine 210.

It belongs to the MnmA/TRMU family.

The protein resides in the cytoplasm. The enzyme catalyses S-sulfanyl-L-cysteinyl-[protein] + uridine(34) in tRNA + AH2 + ATP = 2-thiouridine(34) in tRNA + L-cysteinyl-[protein] + A + AMP + diphosphate + H(+). Functionally, catalyzes the 2-thiolation of uridine at the wobble position (U34) of tRNA, leading to the formation of s(2)U34. The protein is tRNA-specific 2-thiouridylase MnmA of Brucella melitensis biotype 1 (strain ATCC 23456 / CCUG 17765 / NCTC 10094 / 16M).